We begin with the raw amino-acid sequence, 198 residues long: Probable septum site-determining protein MinC (198 aa).

The protein belongs to the MinC family. As to quaternary structure, interacts with MinD and FtsZ.

In terms of biological role, cell division inhibitor that blocks the formation of polar Z ring septums. Rapidly oscillates between the poles of the cell to destabilize FtsZ filaments that have formed before they mature into polar Z rings. Prevents FtsZ polymerization. The polypeptide is Probable septum site-determining protein MinC (Thermosipho melanesiensis (strain DSM 12029 / CIP 104789 / BI429)).